A 530-amino-acid chain; its full sequence is Potassium voltage-gated channel subfamily A member 6 (530 aa).

The disordered stretch occupies residues 1–35 (MRSEKSLTLAAPGEVRGPEGEQQDAGEFQEAEGGG). Ser3 bears the Phosphoserine mark. Residues 21-30 (EQQDAGEFQE) are compositionally biased toward acidic residues. A helical transmembrane segment spans residues 172–193 (PARGIAIVSVLVILISIVIFCL). Residues 203–239 (GRGGSNEGSGTRMSPASRGSHEEEDEDEDSYAFPGSI) are disordered. Residue Ser222 is modified to Phosphoserine; by CK2. The chain crosses the membrane as a helical span at residues 264 to 285 (FFLVETLCIVWFTFELLVRFSA). Cys286 carries S-palmitoyl cysteine lipidation. Residues 297–317 (MNIIDLVAIFPYFITLGTELV) traverse the membrane as a helical segment. A helical; Voltage-sensor transmembrane segment spans residues 339 to 359 (LAILRVIRLVRVFRIFKLSRH). Residues 361-374 (KGLQILGKTLQASM) form an S4-S5 linker region. Residues 375–396 (RELGLLIFFLFIGVILFSSAVY) form a helical membrane-spanning segment. Positions 411 to 422 (PDAFWWAVVTMT) form an intramembrane region, helical. Positions 423-428 (TVGYGD) match the Selectivity filter motif. Residues 423-430 (TVGYGDMY) lie within the membrane without spanning it. Residues 438-466 (IVGSLCAIAGVLTIALPVPVIVSNFNYFY) traverse the membrane as a helical segment. A Phosphoserine; by PKA modification is found at Ser512. The short motif at 527-529 (LTE) is the PDZ-binding element. Thr528 carries the post-translational modification Phosphothreonine; by PKA.

The protein belongs to the potassium channel family. A (Shaker) (TC 1.A.1.2) subfamily. Kv1.6/KCNA6 sub-subfamily. In terms of assembly, homotetramer and heterotetramer of potassium channel proteins. Interacts with KCNAB1 and KCNAB2.

It localises to the cell membrane. The enzyme catalyses K(+)(in) = K(+)(out). Its function is as follows. Voltage-gated potassium channel that mediates transmembrane potassium transport in excitable membranes. Forms tetrameric potassium-selective channels through which potassium ions pass in accordance with their electrochemical gradient. The channel alternates between opened and closed conformations in response to the voltage difference across the membrane. Can form functional homotetrameric channels and heterotetrameric channels that contain variable proportions of KCNA1, KCNA2, KCNA4, KNCA5, KCNA6, and possibly other family members as well; channel properties depend on the type of alpha subunits that are part of the channel. Channel properties are modulated by cytoplasmic beta subunits that regulate the subcellular location of the alpha subunits and promote rapid inactivation. Homotetrameric channels display rapid activation and slow inactivation. The sequence is that of Potassium voltage-gated channel subfamily A member 6 (Kcna6) from Rattus norvegicus (Rat).